Here is a 269-residue protein sequence, read N- to C-terminus: Tryptophan synthase alpha chain (269 aa).

Active-site proton acceptor residues include Glu-49 and Asp-60.

Belongs to the TrpA family. In terms of assembly, tetramer of two alpha and two beta chains.

The enzyme catalyses (1S,2R)-1-C-(indol-3-yl)glycerol 3-phosphate + L-serine = D-glyceraldehyde 3-phosphate + L-tryptophan + H2O. It participates in amino-acid biosynthesis; L-tryptophan biosynthesis; L-tryptophan from chorismate: step 5/5. Functionally, the alpha subunit is responsible for the aldol cleavage of indoleglycerol phosphate to indole and glyceraldehyde 3-phosphate. This chain is Tryptophan synthase alpha chain, found in Pseudomonas fluorescens (strain SBW25).